The sequence spans 170 residues: Protein SprT (170 aa).

The SprT-like domain occupies 23–165 (QLANQHLGTD…RECGEKLQFV (143 aa)). Position 78 (histidine 78) interacts with Zn(2+). Glutamate 79 is a catalytic residue. Histidine 82 lines the Zn(2+) pocket.

The protein belongs to the SprT family. Requires Zn(2+) as cofactor.

It is found in the cytoplasm. This chain is Protein SprT, found in Yersinia enterocolitica serotype O:8 / biotype 1B (strain NCTC 13174 / 8081).